A 210-amino-acid polypeptide reads, in one-letter code: Protein DrgA (210 aa).

It belongs to the nitroreductase family. FMN is required as a cofactor.

In terms of biological role, controls resistance to the herbicide Dinoseb and metronidazole. Involved in detoxification of Dinoseb via the reduction of the nitro group(s) and this process is accompanied by the formation of toxic superoxide anions. This chain is Protein DrgA (drgA), found in Synechocystis sp. (strain ATCC 27184 / PCC 6803 / Kazusa).